The primary structure comprises 305 residues: Ribonuclease BN (305 aa).

7 residues coordinate Zn(2+): His-64, His-66, Asp-68, His-69, His-141, Asp-212, and His-270. Asp-68 serves as the catalytic Proton acceptor.

Belongs to the RNase Z family. RNase BN subfamily. As to quaternary structure, homodimer. Requires Zn(2+) as cofactor.

Functionally, zinc phosphodiesterase, which has both exoribonuclease and endoribonuclease activities. The chain is Ribonuclease BN from Citrobacter koseri (strain ATCC BAA-895 / CDC 4225-83 / SGSC4696).